The chain runs to 306 residues: Esterase tropF (306 aa).

Residues Ser-147, Asp-248, and His-276 each act as charge relay system in the active site.

It belongs to the LovG family.

The protein operates within secondary metabolite biosynthesis. In terms of biological role, esterase; part of the gene cluster that mediates the biosynthesis of the tropolone class of fungal maleic anhydrides. The pathway begins with the synthesis of 3-methylorcinaldehyde by the non-reducing polyketide synthase (PKS) tropA. 3-methylorcinaldehyde is the substrate for the FAD-dependent monooxygenase tropB to yield a dearomatized hydroxycyclohexadione. The 2-oxoglutarate-dependent dioxygenase tropC then performs the oxidative ring expansion to provide the first tropolone metabolite stipitaldehyde. Trop D converts stipitaldehyde into stipitacetal which is in turn converted to stipitalide by the short-chain dehydrogenase/reductase tropE. The next steps involve tropF, tropG, tropH, tropI and tropJ to form successive tropolone maleic anhydrides including stipitaldehydic, stipitatonic and stipitatic acids. The sequence is that of Esterase tropF from Talaromyces stipitatus (strain ATCC 10500 / CBS 375.48 / QM 6759 / NRRL 1006) (Penicillium stipitatum).